The sequence spans 425 residues: tRNA (guanine-N(7)-)-methyltransferase non-catalytic subunit wuho (425 aa).

The interval 67–102 (ATCAGKEPGGKEQQLTKQPEEGGTTASGSGVTSTSV) is disordered. Residues 88 to 102 (GGTTASGSGVTSTSV) are compositionally biased toward low complexity. WD repeat units follow at residues 97-138 (VTST…ARLL), 142-181 (PLAR…APPR), 185-224 (GHLS…DIHS), 228-266 (GHRE…ELLQ), and 325-365 (AGSW…PATS).

This sequence belongs to the WD repeat TRM82 family. Forms a heterodimer with the catalytic subunit Mettl1. Interacts with mei-P26 and weakly interacts with bgcn; required for the function or formation of the mei-P26-bgcn-bam-sxl complex. Interacts with nanos; may be involved in mei-P26-dependent derepression of the BMP signaling pathway. Interacts with Myc; the interaction may be mediated by mei-P26 and may be involved in the regulation of ribosome biogenesis. As to expression, in testis, it is present at high level in hub cells, a niche for germline stem cells of testis. Ubiquitously expressed in all testicular cells throughout spermatogenesis. Ubiquitously expressed in all germline and somatic cells of the ovary.

It is found in the nucleus. Its subcellular location is the cytoplasm. It participates in tRNA modification; N(7)-methylguanine-tRNA biosynthesis. Functionally, required for the Mettl1-dependent formation of N(7)-methylguanine at position 46 (m7G46) in tRNA. In the Mettl1-wuho methyltransferase complex, it is required to stabilize and induce conformational changes of the catalytic subunit. Required for binding of nanos mRNA and repression of translation by the mei-P26-bgcn-bam-sxl complex. May cooperate with mei-P26 and nanos to derepress the BMP signaling pathway. May cooperate with mei-P26 to suppress expression of a subset of microRNAs. May cooperate with mei-P26 to regulate bam expression levels in germline cells during gametogenesis. Required to promote mitosis to meiosis transition during gametogenesis. May regulate germline cell division in part by regulating ribosome biogenesis. In Drosophila yakuba (Fruit fly), this protein is tRNA (guanine-N(7)-)-methyltransferase non-catalytic subunit wuho.